The following is a 221-amino-acid chain: Probable septum site-determining protein MinC (221 aa).

This sequence belongs to the MinC family. In terms of assembly, interacts with MinD and FtsZ.

In terms of biological role, cell division inhibitor that blocks the formation of polar Z ring septums. Rapidly oscillates between the poles of the cell to destabilize FtsZ filaments that have formed before they mature into polar Z rings. Prevents FtsZ polymerization. In Shewanella woodyi (strain ATCC 51908 / MS32), this protein is Probable septum site-determining protein MinC.